A 101-amino-acid chain; its full sequence is DNA-binding protein Fis (101 aa).

The segment at residues 77 to 96 (QTRAANMLGINRGTLRKKLK) is a DNA-binding region (H-T-H motif).

It belongs to the transcriptional regulatory Fis family. As to quaternary structure, homodimer.

Functionally, activates ribosomal RNA transcription. Plays a direct role in upstream activation of rRNA promoters. This chain is DNA-binding protein Fis, found in Shewanella denitrificans (strain OS217 / ATCC BAA-1090 / DSM 15013).